We begin with the raw amino-acid sequence, 173 residues long: MAAETGTAKPARAKKEPQPLVIPKNATDEQRLRLERLMRNPDKLAAIPERPKEWSPRSAPEFVRDVMGSSAGAGSGEFHVYRHLRRREYQRQEFLDRVSEKHNLDDDFQRKLMENKKLEEEKTAKRRLKRQKLKEKKKMAKMAKKEEKKEEIEKHVELDNSPESSDKSDLEDQ.

Disordered regions lie at residues 1–27 (MAAE…KNAT) and 115–173 (NKKL…LEDQ). The tract at residues 50–142 (RPKEWSPRSA…LKEKKKMAKM (93 aa)) is required for RNA-binding. The stretch at 99 to 161 (SEKHNLDDDF…IEKHVELDNS (63 aa)) forms a coiled coil. Residues 124–142 (AKRRLKRQKLKEKKKMAKM) show a composition bias toward basic residues. A required for nuclear localization region spans residues 125–137 (KRRLKRQKLKEKK). Positions 143 to 173 (AKKEEKKEEIEKHVELDNSPESSDKSDLEDQ) are enriched in basic and acidic residues.

Belongs to the PRKRIP1 family. As to quaternary structure, component of the pre-catalytic and post-catalytic spliceosome complexes.

It is found in the nucleus. Its subcellular location is the nucleolus. Required for pre-mRNA splicing as component of the spliceosome. Binds double-stranded RNA. The protein is PRKR-interacting protein 1 homolog (prkrip1) of Xenopus tropicalis (Western clawed frog).